A 424-amino-acid chain; its full sequence is MANIRREKGLNGTIAIPGDKSISHRAVMFGAIAEGTTKVSNFLLGEDCLSTIACFRKLGVKIDQSGNDVTIYGKGLTGLQEPKEVLDVGNSGTTIRLMLGILANVPFHCTIIGDDSIGKRPMKRVTDPLREMNAQIDGREDGQYTPLSIRGGNIKGIHYDSPVASAQVKSAILLAGLKGEGVTTVTEPLQSRDHTERMLRAFGCTVEVTGQTVSLRGGQSLIGTEIEVPGDISSAAFFLVAGAIVPNSKIVLKNVGLNPTRTGIIDVLQKMGAILSVDHVRNEEFEPCGDITIETSKLQGIEIGGSLIPRLIDEIPIIALLATQATGTTVIKDAEELKVKETNRIDTVVQELKKLGVKIEATSDGMIIYGNQKLQGGIVDSHGDHRIGMMLAIASCIADGEVEIQRSDAVSVSYPNFFDQLASL.

Residues Lys-20, Ser-21, and Arg-25 each coordinate 3-phosphoshikimate. A phosphoenolpyruvate-binding site is contributed by Lys-20. Residues Gly-92 and Arg-120 each contribute to the phosphoenolpyruvate site. Residues Ser-165, Gln-167, Asp-313, and Lys-340 each contribute to the 3-phosphoshikimate site. Gln-167 lines the phosphoenolpyruvate pocket. Asp-313 (proton acceptor) is an active-site residue. 2 residues coordinate phosphoenolpyruvate: Arg-344 and Arg-386.

Belongs to the EPSP synthase family. In terms of assembly, monomer.

Its subcellular location is the cytoplasm. The catalysed reaction is 3-phosphoshikimate + phosphoenolpyruvate = 5-O-(1-carboxyvinyl)-3-phosphoshikimate + phosphate. Its pathway is metabolic intermediate biosynthesis; chorismate biosynthesis; chorismate from D-erythrose 4-phosphate and phosphoenolpyruvate: step 6/7. In terms of biological role, catalyzes the transfer of the enolpyruvyl moiety of phosphoenolpyruvate (PEP) to the 5-hydroxyl of shikimate-3-phosphate (S3P) to produce enolpyruvyl shikimate-3-phosphate and inorganic phosphate. The sequence is that of 3-phosphoshikimate 1-carboxyvinyltransferase from Bacillus cytotoxicus (strain DSM 22905 / CIP 110041 / 391-98 / NVH 391-98).